Here is a 419-residue protein sequence, read N- to C-terminus: Putative trans-acting enoyl reductase MT2525 (419 aa).

Lysine 127 is covalently cross-linked (Isoglutamyl lysine isopeptide (Lys-Gln) (interchain with Q-Cter in protein Pup)). A disordered region spans residues 197–232 (NDPDARRQLSDPYMLSPDRGAEPELGPQPDLPSRRG). A helical membrane pass occupies residues 284–304 (VLAPVVSVVGGGVGNAMFGLA).

This sequence belongs to the saccharopine dehydrogenase family. Enoyl reductase subfamily.

The protein resides in the cell membrane. The protein is Putative trans-acting enoyl reductase MT2525 of Mycobacterium tuberculosis (strain CDC 1551 / Oshkosh).